Consider the following 131-residue polypeptide: MSGGKGKAGSSEKASTSRSAKAGLTFPVGRVHRLLRKGNYAQRVGSGAPVYLTSVLEYLAAEILELAGNAARDNKKSRIIPRHLQLAIRNDEELNKLLGHVTIAQGGVLPNIHQSLLPAKKAKAGNASQEL.

The tract at residues 1-22 (MSGGKGKAGSSEKASTSRSAKA) is disordered. Ser-2 carries the post-translational modification N-acetylserine. N6-acetyllysine is present on residues Lys-5 and Lys-7. Gln-105 bears the N5-methylglutamine mark. Residue Ser-128 is modified to Phosphoserine. The [ST]-Q motif signature appears at 128–129 (SQ).

The protein belongs to the histone H2A family. As to quaternary structure, the nucleosome is a histone octamer containing two molecules each of H2A, H2B, H3 and H4 assembled in one H3-H4 heterotetramer and two H2A-H2B heterodimers. The octamer wraps approximately 147 bp of DNA. Phosphorylated to form H2AS128ph (gamma-H2A) in response to DNA double-strand breaks (DSBs) generated by exogenous genotoxic agents and by stalled replication forks. Phosphorylation is dependent on the DNA damage checkpoint kinases MEC1/ATR and TEL1/ATM, spreads on either side of a detected DSB site and may mark the surrounding chromatin for recruitment of proteins required for DNA damage signaling and repair. Gamma-H2A is removed from the DNA prior to the strand invasion-primer extension step of the repair process and subsequently dephosphorylated. Dephosphorylation is necessary for efficient recovery from the DNA damage checkpoint. Post-translationally, acetylated by ESA1 to form H2AK4ac and H2AK7ac.

Its subcellular location is the nucleus. It is found in the chromosome. In terms of biological role, core component of nucleosome which plays a central role in DNA double strand break (DSB) repair. Nucleosomes wrap and compact DNA into chromatin, limiting DNA accessibility to the cellular machineries which require DNA as a template. Histones thereby play a central role in transcription regulation, DNA repair, DNA replication and chromosomal stability. DNA accessibility is regulated via a complex set of post-translational modifications of histones, also called histone code, and nucleosome remodeling. In Debaryomyces hansenii (strain ATCC 36239 / CBS 767 / BCRC 21394 / JCM 1990 / NBRC 0083 / IGC 2968) (Yeast), this protein is Histone H2A.2 (HTA2).